A 256-amino-acid chain; its full sequence is N-glycosylase/DNA lyase (256 aa).

Residues Gln31, Ser58, and Trp69 each contribute to the 8-oxoguanine site. The segment at 125–184 (TLRQLSHIVGARREQKTLVFTIKILNYAYMCSRGVNRVLPFDIPIPVDYRVARLTWCAGL) is helix-hairpin-helix. Lys140 functions as the Schiff-base intermediate with DNA in the catalytic mechanism. Residues Phe144 and Pro170 each contribute to the 8-oxoguanine site. The active site involves Asp172. Residues Asp218 and Trp222 each contribute to the 8-oxoguanine site.

This sequence belongs to the archaeal N-glycosylase/DNA lyase (AGOG) family.

The catalysed reaction is 2'-deoxyribonucleotide-(2'-deoxyribose 5'-phosphate)-2'-deoxyribonucleotide-DNA = a 3'-end 2'-deoxyribonucleotide-(2,3-dehydro-2,3-deoxyribose 5'-phosphate)-DNA + a 5'-end 5'-phospho-2'-deoxyribonucleoside-DNA + H(+). DNA repair enzyme that is part of the base excision repair (BER) pathway; protects from oxidative damage by removing the major product of DNA oxidation, 8-oxoguanine (GO), from single- and double-stranded DNA substrates. This Pyrobaculum aerophilum (strain ATCC 51768 / DSM 7523 / JCM 9630 / CIP 104966 / NBRC 100827 / IM2) protein is N-glycosylase/DNA lyase.